A 338-amino-acid polypeptide reads, in one-letter code: RNA 3'-terminal phosphate cyclase (338 aa).

Residues Q103 and Y283 to Q287 each bind ATP. Residue H308 is the Tele-AMP-histidine intermediate of the active site.

The protein belongs to the RNA 3'-terminal cyclase family. Type 1 subfamily.

It is found in the cytoplasm. It catalyses the reaction a 3'-end 3'-phospho-ribonucleotide-RNA + ATP = a 3'-end 2',3'-cyclophospho-ribonucleotide-RNA + AMP + diphosphate. Catalyzes the conversion of 3'-phosphate to a 2',3'-cyclic phosphodiester at the end of RNA. The mechanism of action of the enzyme occurs in 3 steps: (A) adenylation of the enzyme by ATP; (B) transfer of adenylate to an RNA-N3'P to produce RNA-N3'PP5'A; (C) and attack of the adjacent 2'-hydroxyl on the 3'-phosphorus in the diester linkage to produce the cyclic end product. The biological role of this enzyme is unknown but it is likely to function in some aspects of cellular RNA processing. In Shigella boydii serotype 4 (strain Sb227), this protein is RNA 3'-terminal phosphate cyclase.